Here is a 220-residue protein sequence, read N- to C-terminus: Putative NAD(P)H nitroreductase SERP2086 (220 aa).

Belongs to the nitroreductase family. It depends on FMN as a cofactor.

In Staphylococcus epidermidis (strain ATCC 35984 / DSM 28319 / BCRC 17069 / CCUG 31568 / BM 3577 / RP62A), this protein is Putative NAD(P)H nitroreductase SERP2086.